A 315-amino-acid polypeptide reads, in one-letter code: ADP/ATP translocase (315 aa).

The Mitochondrial intermembrane segment spans residues 1 to 13; the sequence is MSNKQETKILGMP. Solcar repeat units lie at residues 13–106 and 118–210; these read PPFV…FKAM and KWMA…IKPV. A helical transmembrane segment spans residues 14–37; that stretch reads PFVVDFLMGGVSAAVSKTAAAPIE. Lys-30 contributes to the bongkrekate binding site. Residues 38–80 lie on the Mitochondrial matrix side of the membrane; sequence RIKLLVQNQDEMIKAGRLDRRYNGIIDCFRRTTADEGLMALWR. A cardiolipin-binding positions include Ile-62 and 81–83; that span reads GNT. A helical transmembrane segment spans residues 81-104; the sequence is GNTANVIRYFPTQALNFAFRDKFK. Arg-88 contacts ADP. Bongkrekate-binding positions include 88-89 and Asn-96; that span reads RY. The Mitochondrial intermembrane segment spans residues 105–115; the sequence is AMFGYKKDKDG. A helical membrane pass occupies residues 116–145; that stretch reads YAKWMAGNLASGGAAGATSLLFVYSLDYAR. Over 146–184 the chain is Mitochondrial matrix; sequence TRLANDAKSAKGGGARQFNGLIDVYRKTLASDGIAGLYR. Residues Leu-166 and 184 to 185 each bind a cardiolipin; that span reads RG. A helical transmembrane segment spans residues 185–213; the sequence is GFGPSVAGIVVYRGLYFGMYDSIKPVVLV. A bongkrekate-binding site is contributed by 196-197; sequence YR. The Mitochondrial intermembrane segment spans residues 214–216; that stretch reads GPL. Residues 217–242 traverse the membrane as a helical segment; the sequence is ANNFLASFLLGWCVTTGAGIASYPLD. Residues 218-304 form a Solcar repeat; it reads NNFLASFLLG…LSIYDQLQIL (87 aa). Residues 243–283 are Mitochondrial matrix-facing; the sequence is TVRRRMMMTSGEAVKYKSSIDAFRQIIAKEGVKSLFKGAGA. ADP is bound at residue Arg-245. Positions 245 to 250 match the Nucleotide carrier signature motif motif; it reads RRRMMM. Residues 260–261 and 280–282 each bind a cardiolipin; these read SS and GAG. Residues 284–304 traverse the membrane as a helical segment; the sequence is NILRGVAGAGVLSIYDQLQIL. Residues 305–315 lie on the Mitochondrial intermembrane side of the membrane; that stretch reads LFGKAFKGGSG.

It belongs to the mitochondrial carrier (TC 2.A.29) family. Monomer.

It localises to the mitochondrion inner membrane. It catalyses the reaction ADP(in) + ATP(out) = ADP(out) + ATP(in). The matrix-open state (m-state) is inhibited by the membrane-permeable bongkrekic acid (BKA). The cytoplasmic-open state (c-state) is inhibited by the membrane-impermeable toxic inhibitor carboxyatractyloside (CATR). Functionally, ADP:ATP antiporter that mediates import of ADP into the mitochondrial matrix for ATP synthesis, and export of ATP out to fuel the cell. Cycles between the cytoplasmic-open state (c-state) and the matrix-open state (m-state): operates by the alternating access mechanism with a single substrate-binding site intermittently exposed to either the cytosolic (c-state) or matrix (m-state) side of the inner mitochondrial membrane. In Thermothelomyces thermophilus (strain ATCC 42464 / BCRC 31852 / DSM 1799) (Sporotrichum thermophile), this protein is ADP/ATP translocase.